Reading from the N-terminus, the 438-residue chain is Transcriptional enhancer factor TEF-3 (438 aa).

The segment covering 1–18 (MTSEWSSPASPEGSNDSG) has biased composition (polar residues). Disordered regions lie at residues 1 to 36 (MTSE…GVWS) and 195 to 217 (QPSL…STPA). Positions 28–104 (DNDAEGVWSP…QVLARRKARE (77 aa)) form a DNA-binding region, TEA. The segment covering 205-216 (SPTGLPPSSSTP) has biased composition (low complexity).

Enriched in cardiac and skeletal muscle.

The protein resides in the nucleus. Its function is as follows. Transcription factor which plays a key role in the Hippo signaling pathway, a pathway involved in organ size control and tumor suppression by restricting proliferation and promoting apoptosis. The core of this pathway is composed of a kinase cascade wherein MST1/MST2, in complex with its regulatory protein SAV1, phosphorylates and activates LATS1/2 in complex with its regulatory protein MOB1, which in turn phosphorylates and inactivates YAP1 oncoprotein and WWTR1/TAZ. Binds m-cat elements from muscle-specific promoters and differentially activate transcription. In terms of biological role, isoform B has probably a transactivation capacity that is lacking in the other isoforms. Isoform D may be defective in DNA binding. The sequence is that of Transcriptional enhancer factor TEF-3 (TEAD4) from Gallus gallus (Chicken).